We begin with the raw amino-acid sequence, 124 residues long: Holo-[acyl-carrier-protein] synthase (124 aa).

Positions 5 and 51 each coordinate Mg(2+).

Belongs to the P-Pant transferase superfamily. AcpS family. Requires Mg(2+) as cofactor.

Its subcellular location is the cytoplasm. It carries out the reaction apo-[ACP] + CoA = holo-[ACP] + adenosine 3',5'-bisphosphate + H(+). In terms of biological role, transfers the 4'-phosphopantetheine moiety from coenzyme A to a Ser of acyl-carrier-protein. In Hydrogenobaculum sp. (strain Y04AAS1), this protein is Holo-[acyl-carrier-protein] synthase.